A 568-amino-acid chain; its full sequence is Urease subunit alpha (568 aa).

The Urease domain occupies 131-568; the sequence is GGMDAHIHFI…LPLAQRYFLY (438 aa). Ni(2+) is bound by residues histidine 136, histidine 138, and lysine 219. N6-carboxylysine is present on lysine 219. Histidine 221 provides a ligand contact to substrate. Residues histidine 248 and histidine 274 each coordinate Ni(2+). Histidine 322 (proton donor) is an active-site residue. Aspartate 362 provides a ligand contact to Ni(2+).

Belongs to the metallo-dependent hydrolases superfamily. Urease alpha subunit family. In terms of assembly, heterotrimer of UreA (gamma), UreB (beta) and UreC (alpha) subunits. Three heterotrimers associate to form the active enzyme. It depends on Ni cation as a cofactor. Carboxylation allows a single lysine to coordinate two nickel ions.

The protein localises to the cytoplasm. The catalysed reaction is urea + 2 H2O + H(+) = hydrogencarbonate + 2 NH4(+). It functions in the pathway nitrogen metabolism; urea degradation; CO(2) and NH(3) from urea (urease route): step 1/1. In Cereibacter sphaeroides (strain KD131 / KCTC 12085) (Rhodobacter sphaeroides), this protein is Urease subunit alpha.